We begin with the raw amino-acid sequence, 4660 residues long: Low-density lipoprotein receptor-related protein 2 (4660 aa).

Residues M1–G25 form the signal peptide. The Extracellular portion of the chain corresponds to Q26–T4425. LDL-receptor class A domains lie at E27–P63, S66–P104, T107–Y143, T146–T180, L182–N218, T221–E257, and T264–G307. Disulfide bonds link C28/C40, C35/C53, C47/C62, C67/C80, C74/C93, C87/C103, C108/C120, C115/C133, C127/C142, C147/C157, C152/C170, C164/C179, C183/C195, C190/C208, C202/C217, C222/C234, C229/C247, C241/C256, C265/C278, C272/C291, and C285/C306. N-linked (GlcNAc...) asparagine glycans are attached at residues N159 and N178. Residues N299, N340, N387, and N462 are each glycosylated (N-linked (GlcNAc...) asparagine). LDL-receptor class B repeat units lie at residues H435–N477, N478–V520, G521–S567, and K568–H612. An N-linked (GlcNAc...) asparagine glycan is attached at N657. 4 LDL-receptor class B repeats span residues S752–S794, R795–A836, G837–T880, and S881–N924. N-linked (GlcNAc...) asparagine glycosylation occurs at N865. One can recognise an LDL-receptor class A 8 domain in the interval Q1024–G1060. 3 disulfides stabilise this stretch: C1025-C1037, C1032-C1050, and C1044-C1059. Residue N1063 is glycosylated (N-linked (GlcNAc...) asparagine). 7 consecutive LDL-receptor class A domains span residues T1065 to P1102, T1109 to Q1145, T1149 to V1185, N1187 to P1224, M1230 to V1268, T1271 to P1307, and H1312 to N1350. 9 disulfides stabilise this stretch: C1066–C1079, C1073–C1092, C1086–C1101, C1110–C1122, C1117–C1135, C1129–C1144, C1150–C1162, C1157–C1175, and C1169–C1184. Residues W1127, D1130, D1132, D1134, D1140, and E1141 each coordinate Ca(2+). N-linked (GlcNAc...) asparagine glycosylation is present at N1187. 18 cysteine pairs are disulfide-bonded: C1188–C1201, C1195–C1214, C1208–C1223, C1231–C1244, C1238–C1257, C1251–C1267, C1272–C1284, C1279–C1297, C1291–C1306, C1313–C1326, C1320–C1339, C1333–C1349, C1354–C1365, C1361–C1374, C1376–C1389, C1395–C1405, C1401–C1414, and C1416–C1429. Y1206, D1209, V1211, D1213, D1219, and E1220 together coordinate Ca(2+). N-linked (GlcNAc...) asparagine glycans are attached at residues N1328 and N1341. One can recognise an EGF-like 1 domain in the interval N1350–E1390. N1384 carries an N-linked (GlcNAc...) asparagine glycan. Residues D1391 to K1430 form the EGF-like 2; calcium-binding domain. Residues N1451, N1497, and N1551 are each glycosylated (N-linked (GlcNAc...) asparagine). 5 LDL-receptor class B repeats span residues G1479–G1521, R1522–M1564, N1567–N1610, R1611–S1655, and V1656–S1696. N-linked (GlcNAc...) asparagine glycosylation is found at N1676, N1733, and N1811. LDL-receptor class B repeat units follow at residues Q1791 to S1833, R1834 to R1883, G1884 to E1931, Q1932 to F1973, L1974 to R2014, G2108 to A2157, G2158 to H2202, R2203 to T2246, G2247 to S2290, and I2291 to H2333. 4 N-linked (GlcNAc...) asparagine glycosylation sites follow: N2131, N2134, N2178, and N2225. N2396 carries an N-linked (GlcNAc...) asparagine glycan. 5 LDL-receptor class B repeats span residues N2432–N2478, R2479–R2519, G2520–T2563, D2564–Y2605, and I2606–T2647. N-linked (GlcNAc...) asparagine glycosylation is found at N2488 and N2548. LDL-receptor class A domains follow at residues R2700–A2738, T2741–L2777, S2780–P2819, T2822–A2861, T2864–G2902, S2907–E2946, N2949–T2991, A2994–S3030, P3033–H3071, and T3076–G3112. Disulfide bonds link C2701–C2713, C2708–C2726, C2720–C2737, C2742–C2754, C2749–C2767, C2761–C2776, C2781–C2794, C2789–C2807, C2801–C2818, C2823–C2836, C2830–C2849, C2843–C2860, C2865–C2878, C2872–C2891, C2885–C2901, C2908–C2920, C2915–C2933, and C2927–C2945. N2782 carries an N-linked (GlcNAc...) asparagine glycan. N-linked (GlcNAc...) asparagine glycosylation occurs at N2810. N2949 carries N-linked (GlcNAc...) asparagine glycosylation. 18 disulfide bridges follow: C2950–C2967, C2957–C2980, C2974–C2990, C2995–C3007, C3002–C3020, C3014–C3029, C3034–C3046, C3041–C3059, C3053–C3070, C3077–C3089, C3084–C3102, C3096–C3111, C3116–C3128, C3124–C3137, C3139–C3152, C3158–C3169, C3165–C3178, and C3180–C3193. N2989 carries N-linked (GlcNAc...) asparagine glycosylation. The EGF-like 3 domain maps to G3112–V3153. N3127 carries an N-linked (GlcNAc...) asparagine glycan. The EGF-like 4; calcium-binding domain occupies D3154–R3194. N-linked (GlcNAc...) asparagine glycosylation is found at N3213, N3259, N3317, and N3357. 5 LDL-receptor class B repeats span residues E3241–S3283, R3284–R3326, G3335–N3378, D3379–T3421, and V3422–Y3462. An N-linked (GlcNAc...) asparagine glycan is attached at N3448. LDL-receptor class A domains are found at residues M3513 to P3551, F3554 to E3592, R3595 to A3633, T3636 to M3674, N3679 to E3717, P3720 to V3757, E3760 to E3796, and T3799 to P3835. 24 cysteine pairs are disulfide-bonded: C3514–C3527, C3521–C3540, C3534–C3550, C3555–C3567, C3562–C3580, C3574–C3591, C3596–C3608, C3603–C3621, C3615–C3632, C3637–C3649, C3644–C3662, C3656–C3673, C3680–C3694, C3688–C3707, C3701–C3716, C3721–C3734, C3729–C3747, C3741–C3756, C3761–C3773, C3768–C3786, C3780–C3795, C3800–C3812, C3807–C3825, and C3819–C3834. N3566 is a glycosylation site (N-linked (GlcNAc...) asparagine). N3682 is a glycosylation site (N-linked (GlcNAc...) asparagine). A glycan (N-linked (GlcNAc...) asparagine) is linked at N3840. LDL-receptor class A domains lie at Y3843 to F3881, P3884 to R3923, and P3929 to N3965. Cystine bridges form between C3844/C3856, C3851/C3869, C3863/C3880, C3885/C3898, C3893/C3911, C3905/C3922, C3930/C3942, C3937/C3955, and C3949/C3964. Residues N3969 and N3980 are each glycosylated (N-linked (GlcNAc...) asparagine). In terms of domain architecture, EGF-like 5; calcium-binding spans D4009–A4050. 3 disulfides stabilise this stretch: C4013/C4023, C4019/C4032, and C4034/C4049. A glycan (N-linked (GlcNAc...) asparagine) is linked at N4070. 3 LDL-receptor class B repeats span residues R4156–L4198, G4199–N4242, and D4244–Q4285. The N-linked (GlcNAc...) asparagine glycan is linked to N4329. In terms of domain architecture, EGF-like 6 spans M4379 to E4413. 3 disulfide bridges follow: C4383-C4391, C4385-C4401, and C4403-C4412. A helical transmembrane segment spans residues M4426–F4446. At F4447 to V4660 the chain is on the cytoplasmic side. The SH3-binding motif lies at S4454–P4463. The short motif at P4457–L4462 is the PxLPxI/L motif 1; mediates interaction with ANKRA2 element. The short motif at P4460–L4465 is the PxLPxI/L motif 2; mediates interaction with ANKRA2 element. Phosphoserine occurs at positions 4464 and 4467. An Endocytosis signal motif is present at residues F4522 to Y4527. The segment at Q4558 to V4660 is disordered. S4577 carries the phosphoserine modification. The interaction with DAB2 stretch occupies residues Q4597–D4610. The NPXY motif signature appears at N4603–Y4606. The SH2-binding signature appears at Y4606–M4609. The SH3-binding signature appears at V4619–K4630. The residue at position 4624 (S4624) is a Phosphoserine. Low complexity predominate over residues L4627–S4636. Phosphothreonine is present on T4637. S4658 is modified (phosphoserine).

The protein belongs to the LDLR family. In terms of assembly, binds plasminogen, extracellular matrix components, plasminogen activator-plasminogen activator inhibitor type I complex, apolipoprotein E-enriched beta-VLDL, lipoprotein lipase, lactoferrin, CLU/clusterin and calcium. Forms a multimeric complex together with LRPAP1. Interacts (via PxLPxI/L motif) with ANKRA2 (via ankyrin repeats). Interacts with LRP2BP. Interacts (via NPXY motif) with DAB2; the interaction is not affected by tyrosine phosphorylation of the NPXY motif. Interacts with MB. Interacts with BMP4. Interacts with the Sonic hedgehog protein N-product which is the active product of SHH. Interacts with CST3 in a calcium-dependent manner. Interacts with the vitamin-D binding protein GC/DBP. Interacts with sex hormone-binding protein SHBG. Interacts with angiotensin-2. Also interacts with angiotensin 1-7. Interacts with APOM. Interacts with selenoprotein SEPP1. Interacts with LEP. Interacts with ALB. Interacts with the antiapoptotic protein BIRC5/survivin. Interacts with matrix metalloproteinase MMP2 in complex with metalloproteinase inhibitor TIMP1. In neurons, forms a trimeric complex with APP and APPB1/FE65. Interacts with LDLRAP1/ARH; mediates trafficking of LRP2 to the endocytic recycling compartment. Does not interact with beta-amyloid protein 40 alone but interacts with the complex composed of beta-amyloid protein 40 and CLU/APOJ. Interacts with MDK. Post-translationally, a fraction undergoes proteolytic cleavage of the extracellular domain at the cell membrane to generate a cytoplasmic tail fragment. This is internalized into the early endosome from where it trafficks in an LDLRAP1/ARH-dependent manner to the endocytic recycling compartment (ERC). In the ERC, it is further cleaved by gamma-secretase to release a fragment which translocates to the nucleus and mediates transcriptional repression. In terms of processing, N-glycosylation is required for ligand binding. Contains core-fucosylated N-glycans in kidney proximal convoluted tubules (PCTs) and hybrid-type N-glycans in proximal straight tubules (PSTs). Interacts with ligands in a glycoform-dependent manner. Retinol-binding protein and the vitamin D carrier GC/DBP are endocytosed primarily by PCTs, albumin is endocytosed equally by PCTs and PSTs, and the aminoglycoside kanamycin is endocytosed primarily by PSTs. In the inner ear, strongly expressed in the marginal cells of the stria vascularis (at protein level). In the female reproductive tract, expressed on the luminal side of the uterine epithelium (at protein level). In the adult brain, expressed in ependymal cells of the lateral ventricles where expression is restricted to the ependyma that faces the stem cell niche (at protein level). Expressed in neurons throughout the brain including in the hippocampus, limbic cortices and cerebellum (at protein level). In the developing optic nerve, expressed exclusively in astrocytes at 14.5 dpc, 16.5 dpc and 18.5 dpc (at protein level).

It is found in the apical cell membrane. The protein resides in the endosome lumen. The protein localises to the membrane. Its subcellular location is the coated pit. It localises to the cell projection. It is found in the dendrite. The protein resides in the axon. Multiligand endocytic receptor. Acts together with CUBN to mediate endocytosis of high-density lipoproteins. Mediates receptor-mediated uptake of polybasic drugs such as aprotinin, aminoglycosides and polymyxin B. In the kidney, mediates the tubular uptake and clearance of leptin. Also mediates transport of leptin across the blood-brain barrier through endocytosis at the choroid plexus epithelium. Endocytosis of leptin in neuronal cells is required for hypothalamic leptin signaling and leptin-mediated regulation of feeding and body weight. Mediates endocytosis and subsequent lysosomal degradation of CST3 in kidney proximal tubule cells. Mediates renal uptake of 25-hydroxyvitamin D3 in complex with the vitamin D3 transporter GC/DBP. Mediates renal uptake of metallothionein-bound heavy metals. Together with CUBN, mediates renal reabsorption of myoglobin. Mediates renal uptake and subsequent lysosomal degradation of APOM. Plays a role in kidney selenium homeostasis by mediating renal endocytosis of selenoprotein SEPP1. Mediates renal uptake of the antiapoptotic protein BIRC5/survivin which may be important for functional integrity of the kidney. Mediates renal uptake of matrix metalloproteinase MMP2 in complex with metalloproteinase inhibitor TIMP1. Mediates endocytosis of Sonic hedgehog protein N-product (ShhN), the active product of SHH. Also mediates ShhN transcytosis. In the embryonic neuroepithelium, mediates endocytic uptake and degradation of BMP4, is required for correct SHH localization in the ventral neural tube and plays a role in patterning of the ventral telencephalon. Required at the onset of neurulation to sequester SHH on the apical surface of neuroepithelial cells of the rostral diencephalon ventral midline and to control PTCH1-dependent uptake and intracellular trafficking of SHH. During neurulation, required in neuroepithelial cells for uptake of folate bound to the folate receptor FOLR1 which is necessary for neural tube closure. In the adult brain, negatively regulates BMP signaling in the subependymal zone which enables neurogenesis to proceed. In astrocytes, mediates endocytosis of ALB which is required for the synthesis of the neurotrophic factor oleic acid. Involved in neurite branching. During optic nerve development, required for SHH-mediated migration and proliferation of oligodendrocyte precursor cells. Mediates endocytic uptake and clearance of SHH in the retinal margin which protects retinal progenitor cells from mitogenic stimuli and keeps them quiescent. Plays a role in reproductive organ development by mediating uptake in reproductive tissues of androgen and estrogen bound to the sex hormone binding protein SHBG. Mediates endocytosis of angiotensin-2. Also mediates endocytosis of angiotensin 1-7. Binds to the complex composed of beta-amyloid protein 40 and CLU/APOJ and mediates its endocytosis and lysosomal degradation. Required for embryonic heart development. Required for normal hearing, possibly through interaction with estrogen in the inner ear. This is Low-density lipoprotein receptor-related protein 2 (Lrp2) from Mus musculus (Mouse).